Reading from the N-terminus, the 339-residue chain is tRNA N6-adenosine threonylcarbamoyltransferase (339 aa).

Fe cation contacts are provided by histidine 111 and histidine 115. Substrate contacts are provided by residues 139-143 (LVSGG), aspartate 172, glycine 185, aspartate 189, and asparagine 280. Aspartate 308 serves as a coordination point for Fe cation.

This sequence belongs to the KAE1 / TsaD family. Fe(2+) serves as cofactor.

Its subcellular location is the cytoplasm. The enzyme catalyses L-threonylcarbamoyladenylate + adenosine(37) in tRNA = N(6)-L-threonylcarbamoyladenosine(37) in tRNA + AMP + H(+). In terms of biological role, required for the formation of a threonylcarbamoyl group on adenosine at position 37 (t(6)A37) in tRNAs that read codons beginning with adenine. Is involved in the transfer of the threonylcarbamoyl moiety of threonylcarbamoyl-AMP (TC-AMP) to the N6 group of A37, together with TsaE and TsaB. TsaD likely plays a direct catalytic role in this reaction. The protein is tRNA N6-adenosine threonylcarbamoyltransferase of Bacteroides fragilis (strain ATCC 25285 / DSM 2151 / CCUG 4856 / JCM 11019 / LMG 10263 / NCTC 9343 / Onslow / VPI 2553 / EN-2).